The following is a 284-amino-acid chain: Nucleotide-binding protein NMC0691 (284 aa).

Residue 8 to 15 coordinates ATP; sequence GLSGSGKS. 58–61 lines the GTP pocket; sequence DVRS.

It belongs to the RapZ-like family.

In terms of biological role, displays ATPase and GTPase activities. This chain is Nucleotide-binding protein NMC0691, found in Neisseria meningitidis serogroup C / serotype 2a (strain ATCC 700532 / DSM 15464 / FAM18).